Here is an 823-residue protein sequence, read N- to C-terminus: ATP-dependent RNA helicase HrpA (823 aa).

The Helicase ATP-binding domain maps to 16–179 (IKVLKNHNVL…FNNAPVVSIE (164 aa)). 29–36 (SPTGSGKT) contacts ATP. Positions 126-129 (DEAH) match the DEAH box motif. In terms of domain architecture, Helicase C-terminal spans 203-374 (KIKEIVLNVI…EVVLRMADIG (172 aa)).

It belongs to the DEAD box helicase family. DEAH subfamily.

It carries out the reaction ATP + H2O = ADP + phosphate + H(+). Functionally, has RNA-stimulated ATPase activity and RNA helicase activity. Involved in global regulation of gene expression. Could be involved in RNA processing and post-transcriptional gene regulation. Essential for both tick transmission and mouse infection. In Borreliella burgdorferi (strain ATCC 35210 / DSM 4680 / CIP 102532 / B31) (Borrelia burgdorferi), this protein is ATP-dependent RNA helicase HrpA.